Here is a 95-residue protein sequence, read N- to C-terminus: Co-chaperonin GroES (95 aa).

This sequence belongs to the GroES chaperonin family. Heptamer of 7 subunits arranged in a ring. Interacts with the chaperonin GroEL.

It localises to the cytoplasm. Its function is as follows. Together with the chaperonin GroEL, plays an essential role in assisting protein folding. The GroEL-GroES system forms a nano-cage that allows encapsulation of the non-native substrate proteins and provides a physical environment optimized to promote and accelerate protein folding. GroES binds to the apical surface of the GroEL ring, thereby capping the opening of the GroEL channel. The sequence is that of Co-chaperonin GroES from Xylella fastidiosa (strain M12).